The chain runs to 319 residues: Beta-ketoacyl-[acyl-carrier-protein] synthase III (319 aa).

Active-site residues include cysteine 112 and histidine 246. Positions 247–251 (QANFR) are ACP-binding. Asparagine 276 is a catalytic residue.

It belongs to the thiolase-like superfamily. FabH family. Homodimer.

It is found in the cytoplasm. It carries out the reaction malonyl-[ACP] + acetyl-CoA + H(+) = 3-oxobutanoyl-[ACP] + CO2 + CoA. It participates in lipid metabolism; fatty acid biosynthesis. Its function is as follows. Catalyzes the condensation reaction of fatty acid synthesis by the addition to an acyl acceptor of two carbons from malonyl-ACP. Catalyzes the first condensation reaction which initiates fatty acid synthesis and may therefore play a role in governing the total rate of fatty acid production. Possesses both acetoacetyl-ACP synthase and acetyl transacylase activities. Its substrate specificity determines the biosynthesis of branched-chain and/or straight-chain of fatty acids. The chain is Beta-ketoacyl-[acyl-carrier-protein] synthase III from Shewanella oneidensis (strain ATCC 700550 / JCM 31522 / CIP 106686 / LMG 19005 / NCIMB 14063 / MR-1).